Consider the following 83-residue polypeptide: U5-theraphotoxin-Hs1d (83 aa).

A signal peptide spans 1–21 (MKTSMFLTLTGLVLLFVVCYA). The propeptide occupies 22 to 49 (SESEEKEFPKELLSSIFAADSDFKVEER). 3 disulfide bridges follow: C51–C63, C56–C68, and C62–C75.

It belongs to the neurotoxin 10 (Hwtx-1) family. 51 (Hntx-8) subfamily. Hntx-8 sub-subfamily. In terms of tissue distribution, expressed by the venom gland.

It is found in the secreted. Functionally, agglutinates erythrocytes. This is U5-theraphotoxin-Hs1d from Cyriopagopus schmidti (Chinese bird spider).